Reading from the N-terminus, the 208-residue chain is ATP-dependent Clp protease proteolytic subunit (208 aa).

Serine 105 (nucleophile) is an active-site residue. Histidine 130 is a catalytic residue.

The protein belongs to the peptidase S14 family. As to quaternary structure, fourteen ClpP subunits assemble into 2 heptameric rings which stack back to back to give a disk-like structure with a central cavity, resembling the structure of eukaryotic proteasomes.

Its subcellular location is the cytoplasm. It carries out the reaction Hydrolysis of proteins to small peptides in the presence of ATP and magnesium. alpha-casein is the usual test substrate. In the absence of ATP, only oligopeptides shorter than five residues are hydrolyzed (such as succinyl-Leu-Tyr-|-NHMec, and Leu-Tyr-Leu-|-Tyr-Trp, in which cleavage of the -Tyr-|-Leu- and -Tyr-|-Trp bonds also occurs).. Cleaves peptides in various proteins in a process that requires ATP hydrolysis. Has a chymotrypsin-like activity. Plays a major role in the degradation of misfolded proteins. This Xanthomonas axonopodis pv. citri (strain 306) protein is ATP-dependent Clp protease proteolytic subunit.